The following is a 427-amino-acid chain: Neuronal pentraxin-2 (427 aa).

The first 17 residues, 1–17 (MLALLAAGVAFAVVVLA), serve as a signal peptide directing secretion. Asn144 and Asn185 each carry an N-linked (GlcNAc...) asparagine glycan. A Pentraxin (PTX) domain is found at 219–420 (DAFKVSLPFR…GASKWPVETC (202 aa)). Cys249 and Cys309 form a disulfide bridge. Positions 273, 351, 352, 353, and 363 each coordinate Ca(2+). Asn389 is a glycosylation site (N-linked (GlcNAc...) asparagine).

In terms of assembly, homooligomer or heterooligomer (probably pentamer) with neuronal pentraxin receptor (NPTXR). Ca(2+) is required as a cofactor. Testis specific.

The protein localises to the cytoplasmic vesicle. Its subcellular location is the secretory vesicle. The protein resides in the acrosome lumen. In terms of biological role, may be involved in binding, concentrating, and sorting soluble glycoproteins or glycolipids that are destined for the acrosome. In Cavia porcellus (Guinea pig), this protein is Neuronal pentraxin-2 (NPTX2).